A 166-amino-acid polypeptide reads, in one-letter code: NAD(P)H-quinone oxidoreductase subunit I, chloroplastic (166 aa).

4Fe-4S ferredoxin-type domains are found at residues 55-84 (GRIHFEFDKCIACEVCVRVCPIDLPVVDWK) and 95-124 (LNYSIDFGICIFCGNCVEYCPTNCLSMTEE). Residues C64, C67, C70, C74, C104, C107, C110, and C114 each contribute to the [4Fe-4S] cluster site.

It belongs to the complex I 23 kDa subunit family. NDH is composed of at least 16 different subunits, 5 of which are encoded in the nucleus. Requires [4Fe-4S] cluster as cofactor.

The protein resides in the plastid. Its subcellular location is the chloroplast thylakoid membrane. The catalysed reaction is a plastoquinone + NADH + (n+1) H(+)(in) = a plastoquinol + NAD(+) + n H(+)(out). The enzyme catalyses a plastoquinone + NADPH + (n+1) H(+)(in) = a plastoquinol + NADP(+) + n H(+)(out). NDH shuttles electrons from NAD(P)H:plastoquinone, via FMN and iron-sulfur (Fe-S) centers, to quinones in the photosynthetic chain and possibly in a chloroplast respiratory chain. The immediate electron acceptor for the enzyme in this species is believed to be plastoquinone. Couples the redox reaction to proton translocation, and thus conserves the redox energy in a proton gradient. In Acanthospermum australe (Paraguayan starburr), this protein is NAD(P)H-quinone oxidoreductase subunit I, chloroplastic.